We begin with the raw amino-acid sequence, 133 residues long: Profilin-2 (133 aa).

An intrachain disulfide couples cysteine 13 to cysteine 117. The Involved in PIP2 interaction signature appears at alanine 83–threonine 99. A Phosphothreonine modification is found at threonine 113.

This sequence belongs to the profilin family. As to quaternary structure, occurs in many kinds of cells as a complex with monomeric actin in a 1:1 ratio. In terms of processing, phosphorylated by MAP kinases.

It is found in the cytoplasm. The protein localises to the cytoskeleton. Its function is as follows. Binds to actin and affects the structure of the cytoskeleton. At high concentrations, profilin prevents the polymerization of actin, whereas it enhances it at low concentrations. This Corylus avellana (European hazel) protein is Profilin-2.